Consider the following 315-residue polypeptide: Tetraacyldisaccharide 4'-kinase (315 aa).

45–52 lines the ATP pocket; it reads SVGGSGKT.

The protein belongs to the LpxK family.

The enzyme catalyses a lipid A disaccharide + ATP = a lipid IVA + ADP + H(+). It functions in the pathway glycolipid biosynthesis; lipid IV(A) biosynthesis; lipid IV(A) from (3R)-3-hydroxytetradecanoyl-[acyl-carrier-protein] and UDP-N-acetyl-alpha-D-glucosamine: step 6/6. Functionally, transfers the gamma-phosphate of ATP to the 4'-position of a tetraacyldisaccharide 1-phosphate intermediate (termed DS-1-P) to form tetraacyldisaccharide 1,4'-bis-phosphate (lipid IVA). In Aquifex aeolicus (strain VF5), this protein is Tetraacyldisaccharide 4'-kinase.